The primary structure comprises 464 residues: Peptidase inhibitor 16 (464 aa).

An N-terminal signal peptide occupies residues 1–27 (MHGSGSLLACLLPPLLLLGAAPGPAGA). In terms of domain architecture, SCP spans 37–165 (VELHNLYRTQ…TNIHLLVCNY (129 aa)). N114 is a glycosylation site (N-linked (GlcNAc...) asparagine). Disordered stretches follow at residues 208 to 241 (DLSS…TEPP), 260 to 281 (VETK…TKTP), 304 to 347 (PATL…LMGT), and 386 to 412 (TTLK…ANAV). The segment covering 311–325 (STHDPIPKSADKEAS) has biased composition (basic and acidic residues). A compositionally biased stretch (low complexity) spans 395-411 (SSKSLSNSPSASATANA).

This sequence belongs to the CRISP family. As to quaternary structure, interacts with PSP94/MSMB. N-glycosylated.

It localises to the secreted. In terms of biological role, may inhibit cardiomyocyte growth. In Bos taurus (Bovine), this protein is Peptidase inhibitor 16 (PI16).